The primary structure comprises 522 residues: MAPEMDQFYRSTMAIYKSIMEQFNPALENLVYLGNNYLRAFHALSEAAEVYFSAIQKIGEQALQSSTSQILGEILVQMSDTQRHLNSDLEVVVQTFHGDLLQHMEKNTKLDMQFIKDSCQHYEIEYRHRAANLEKCMSELWRMERKRDKNAREMKESVNRLHAQMQAFVSESKRAAELEEKRRYRFLAEKHLLLSNTFLQFLGRARGMLQNRVLLWKEQSEASRSPSRAHSPGLLGPALGPPYPSGRLTPTRLDMPPRPLGEYGSPRSRHGSGSYGPEPAEARSASQLEPDRRSLPRTPSASSLYASSTQRSRSNSFGERLGGGGARRVRALVSHSEGANHTLLRFSAGDVVEVLVPEAQNGWLYGKLEGSSASGWFPEAYVKPVEEIPVNPMNPVAPMNSMAPMSPMNELPSRSYPLRGSHSLDDLLDRPGNPTASSEYWDSQSRSRTPSRVPSRAPSPAPPPLPSSRRSSVGSMGAATDVKKLMSWEQNPPELFPRGTNPFATVKLRPTVTNDRSAPLIR.

An IMD domain is found at 1–239 (MAPEMDQFYR…HSPGLLGPAL (239 aa)). 2 disordered regions span residues 220–325 (SEAS…GGGG) and 404–502 (PMSP…GTNP). 3 positions are modified to phosphoserine: Ser-231, Ser-272, and Ser-303. Residues 297–317 (RTPSASSLYASSTQRSRSNSF) show a composition bias toward polar residues. The SH3 domain occupies 324-387 (GGARRVRALV…PEAYVKPVEE (64 aa)). Low complexity predominate over residues 443-456 (SQSRSRTPSRVPSR). Positions 457–466 (APSPAPPPLP) are enriched in pro residues. A phosphoserine mark is found at Ser-472 and Ser-475.

In terms of tissue distribution, expressed in the epithelial layer of the intestine and in the kidney.

The protein localises to the cell membrane. Its subcellular location is the cell junction. It is found in the cytoplasmic vesicle membrane. Phosphoinositides-binding protein that induces the formation of planar or gently curved membrane structures. Binds to phosphoinositides, including to phosphatidylinositol 4,5-bisphosphate (PtdIns(4,5)P2) headgroups. There seems to be no clear preference for a specific phosphoinositide. The polypeptide is BAR/IMD domain-containing adapter protein 2-like 2 (Baiap2l2) (Mus musculus (Mouse)).